We begin with the raw amino-acid sequence, 236 residues long: Small ribosomal subunit protein uS2c (236 aa).

The protein belongs to the universal ribosomal protein uS2 family.

The protein localises to the plastid. It is found in the chloroplast. The polypeptide is Small ribosomal subunit protein uS2c (rps2) (Panax ginseng (Korean ginseng)).